A 257-amino-acid polypeptide reads, in one-letter code: Dof zinc finger protein DOF5.3 (257 aa).

The tract at residues 23-50 (LSYSSNPTPLDNDQKKPSPATAVTRPQP) is disordered. Over residues 24 to 33 (SYSSNPTPLD) the composition is skewed to polar residues. The Dof-type zinc finger occupies 55 to 109 (LRCPRCDSTNTKFCYYNNYSLTQPRYFCKSCRRYWTKGGTLRNIPVGGGCRKNKR). 4 residues coordinate Zn(2+): Cys-57, Cys-60, Cys-82, and Cys-85. The segment at 104-127 (CRKNKRSTSSAARSLRTTPEPASH) is disordered. The span at 110 to 121 (STSSAARSLRTT) shows a compositional bias: low complexity.

In terms of tissue distribution, the PEAR proteins (e.g. DOF2.4, DOF5.1, DOF3.2, DOF1.1, DOF5.6 and DOF5.3) form a short-range concentration gradient that peaks at protophloem sieve elements (PSE). Accumulates in the stele.

Its subcellular location is the nucleus. In terms of biological role, transcription factor that binds specifically to a 5'-AA[AG]G-3' consensus core sequence. The PEAR proteins (e.g. DOF2.4, DOF5.1, DOF3.2, DOF1.1, DOF5.6 and DOF5.3) activate gene expression that promotes radial growth of protophloem sieve elements. This chain is Dof zinc finger protein DOF5.3, found in Arabidopsis thaliana (Mouse-ear cress).